Here is a 175-residue protein sequence, read N- to C-terminus: Large ribosomal subunit protein uL10 (175 aa).

Belongs to the universal ribosomal protein uL10 family. In terms of assembly, part of the ribosomal stalk of the 50S ribosomal subunit. The N-terminus interacts with L11 and the large rRNA to form the base of the stalk. The C-terminus forms an elongated spine to which L12 dimers bind in a sequential fashion forming a multimeric L10(L12)X complex.

Its function is as follows. Forms part of the ribosomal stalk, playing a central role in the interaction of the ribosome with GTP-bound translation factors. This is Large ribosomal subunit protein uL10 from Synechococcus sp. (strain CC9902).